The sequence spans 378 residues: Cytochrome b (378 aa).

4 helical membrane-spanning segments follow: residues 34–54 (FGSL…FLAM), 78–99 (WLLR…YLHV), 114–134 (WLIG…GYVL), and 179–199 (FFTF…IHLL). Residues H84 and H98 each contribute to the heme b site. Residues H183 and H197 each coordinate heme b. H202 is an a ubiquinone binding site. 4 helical membrane-spanning segments follow: residues 227–247 (FKDI…VLIS), 289–309 (LGGV…PFYN), 321–341 (INQV…WIGA), and 348–368 (YVLI…VNPL).

The protein belongs to the cytochrome b family. In terms of assembly, the main subunits of complex b-c1 are: cytochrome b, cytochrome c1 and the Rieske protein. Heme b serves as cofactor.

It localises to the mitochondrion inner membrane. Its function is as follows. Component of the ubiquinol-cytochrome c reductase complex (complex III or cytochrome b-c1 complex) that is part of the mitochondrial respiratory chain. The b-c1 complex mediates electron transfer from ubiquinol to cytochrome c. Contributes to the generation of a proton gradient across the mitochondrial membrane that is then used for ATP synthesis. This is Cytochrome b (mt:Cyt-b) from Drosophila sechellia (Fruit fly).